The primary structure comprises 51 residues: Large ribosomal subunit protein bL33 (51 aa).

The disordered stretch occupies residues 1 to 23 (MREKIKLESSAGTGHFYTTTKNK). The segment covering 10–20 (SAGTGHFYTTT) has biased composition (polar residues).

It belongs to the bacterial ribosomal protein bL33 family.

This chain is Large ribosomal subunit protein bL33, found in Nitrosomonas eutropha (strain DSM 101675 / C91 / Nm57).